The primary structure comprises 164 residues: ATP synthase subunit b (164 aa).

Residues 4-24 (IHFDLTLVVQVLSFLLLVYIL) form a helical membrane-spanning segment.

This sequence belongs to the ATPase B chain family. F-type ATPases have 2 components, F(1) - the catalytic core - and F(0) - the membrane proton channel. F(1) has five subunits: alpha(3), beta(3), gamma(1), delta(1), epsilon(1). F(0) has three main subunits: a(1), b(2) and c(10-14). The alpha and beta chains form an alternating ring which encloses part of the gamma chain. F(1) is attached to F(0) by a central stalk formed by the gamma and epsilon chains, while a peripheral stalk is formed by the delta and b chains.

The protein localises to the cell membrane. F(1)F(0) ATP synthase produces ATP from ADP in the presence of a proton or sodium gradient. F-type ATPases consist of two structural domains, F(1) containing the extramembraneous catalytic core and F(0) containing the membrane proton channel, linked together by a central stalk and a peripheral stalk. During catalysis, ATP synthesis in the catalytic domain of F(1) is coupled via a rotary mechanism of the central stalk subunits to proton translocation. Functionally, component of the F(0) channel, it forms part of the peripheral stalk, linking F(1) to F(0). The sequence is that of ATP synthase subunit b from Desulfitobacterium hafniense (strain Y51).